Reading from the N-terminus, the 835-residue chain is Ribosome-releasing factor 2, mitochondrial (835 aa).

A mitochondrion-targeting transit peptide spans 1-50 (MPWCNTRLRTCGASPKIFLRRVRCPVLLHNWTIGRVSSVSKMILRFLRSY). The tr-type G domain occupies 57 to 343 (TRVRNIGIIA…AVVDYLPSPA (287 aa)). GTP is bound by residues 66 to 73 (AHIDAGKT), 131 to 135 (DTPGH), and 183 to 186 (NKMD).

It belongs to the TRAFAC class translation factor GTPase superfamily. Classic translation factor GTPase family. EF-G/EF-2 subfamily.

Its subcellular location is the mitochondrion. In terms of biological role, mitochondrial GTPase that mediates the disassembly of ribosomes from messenger RNA at the termination of mitochondrial protein biosynthesis. Not involved in the GTP-dependent ribosomal translocation step during translation elongation. The chain is Ribosome-releasing factor 2, mitochondrial from Eremothecium gossypii (strain ATCC 10895 / CBS 109.51 / FGSC 9923 / NRRL Y-1056) (Yeast).